The sequence spans 329 residues: Ubiquinol oxidase 1c, mitochondrial (329 aa).

The N-terminal 45 residues, 1–45 (MITTLLRRSLLDASKQATSINGILFHQLAPAKYFRVPAVGGLRDF), are a transit peptide targeting the mitochondrion. Residues 154-174 (AIMLETVAAVPGMVGGMLMHF) traverse the membrane as a helical segment. Residues E158, E197, and H200 each coordinate Fe cation. A helical transmembrane segment spans residues 216–236 (ALVISVQGVFFNAYLIGYIIS). 3 residues coordinate Fe cation: E248, E299, and H302.

The protein belongs to the alternative oxidase family. Homodimer; disulfide-linked. The cofactor is Fe cation. In terms of tissue distribution, expressed in roots, stems, leaves, cotyledons and flowers. High expression in stamens.

The protein localises to the mitochondrion inner membrane. It carries out the reaction 2 a ubiquinol + O2 = 2 a ubiquinone + 2 H2O. Catalyzes the cyanide-resistant oxidation of ubiquinol and the reduction of molecular oxygen to water, but does not translocate protons and consequently is not linked to oxidative phosphorylation. May increase respiration when the cytochrome respiratory pathway is restricted, or in response to low temperatures. This Arabidopsis thaliana (Mouse-ear cress) protein is Ubiquinol oxidase 1c, mitochondrial (AOX1C).